Here is a 364-residue protein sequence, read N- to C-terminus: Phosphate acyltransferase (364 aa).

The interval 343-364 is disordered; the sequence is IRTSGRSGGKSKSSAAREDGAA.

It belongs to the PlsX family. Homodimer. Probably interacts with PlsY.

The protein localises to the cytoplasm. The enzyme catalyses a fatty acyl-[ACP] + phosphate = an acyl phosphate + holo-[ACP]. The protein operates within lipid metabolism; phospholipid metabolism. In terms of biological role, catalyzes the reversible formation of acyl-phosphate (acyl-PO(4)) from acyl-[acyl-carrier-protein] (acyl-ACP). This enzyme utilizes acyl-ACP as fatty acyl donor, but not acyl-CoA. The chain is Phosphate acyltransferase from Novosphingobium aromaticivorans (strain ATCC 700278 / DSM 12444 / CCUG 56034 / CIP 105152 / NBRC 16084 / F199).